The chain runs to 120 residues: UPF0231 protein Ent638_0667 (120 aa).

It belongs to the UPF0231 family.

The sequence is that of UPF0231 protein Ent638_0667 from Enterobacter sp. (strain 638).